The chain runs to 617 residues: Sodium-dependent noradrenaline transporter (617 aa).

The interval 1–23 (MLLARMNPQVQPENNGADTGPEQ) is disordered. The Cytoplasmic segment spans residues 1 to 62 (MLLARMNPQV…AQPRETWGKK (62 aa)). Residues 8–17 (PQVQPENNGA) are compositionally biased toward polar residues. Residues 63-88 (IDFLLSVVGFAVDLANVWRFPYLCYK) traverse the membrane as a helical segment. Na(+)-binding residues include glycine 71, alanine 73, and valine 74. (R)-noradrenaline is bound at residue aspartate 75. Residue aspartate 75 participates in dopamine binding. Asparagine 78 lines the Na(+) pocket. (R)-noradrenaline contacts are provided by tyrosine 87 and lysine 88. The Extracellular segment spans residues 89–92 (NGGG). The helical transmembrane segment at 93–116 (AFLIPYTLFLIIAGMPLFYMELAL) threads the bilayer. Over 117-135 (GQYNREGAATVWKICPFFK) the chain is Cytoplasmic. Residues 136 to 166 (GVGYAVILIALYVGFYYNVIIAWSLYYLFSS) traverse the membrane as a helical segment. (R)-noradrenaline-binding residues include alanine 145 and glycine 149. A dopamine-binding site is contributed by alanine 145. Residues 167–233 (FTLNLPWTDC…SSGIHDIGLP (67 aa)) lie on the Extracellular side of the membrane. Cysteine 176 and cysteine 185 form a disulfide bridge. Asparagine 184, asparagine 192, and asparagine 198 each carry an N-linked (GlcNAc...) asparagine glycan. The chain crosses the membrane as a helical span at residues 234–254 (QWQLLLCLMVVVIVLYFSLWK). Over 255–257 (GVK) the chain is Cytoplasmic. The helical transmembrane segment at 258-282 (TSGKVVWITATLPYFVLFVLLVHGV) threads the bilayer. At 283-306 (TLPGASNGINAYLHIDFYRLKEAT) the chain is on the extracellular side. Residues 307 to 332 (VWIDAATQIFFSLGAGFGVLIAFASY) form a helical membrane-spanning segment. Phenylalanine 317 is a binding site for (R)-noradrenaline. Residue phenylalanine 317 participates in dopamine binding. A Na(+)-binding site is contributed by serine 318. Topologically, residues 333 to 338 (NKFDNN) are cytoplasmic. The chain crosses the membrane as a helical span at residues 339-362 (CYRDALLTSSINCITSFVSGFAIF). Asparagine 350 contributes to the Na(+) binding site. The Extracellular portion of the chain corresponds to 363–402 (SILGYMAHEHKVNIEDVATEGAGLVFILYPEAISTLSGST). Glutamate 382 contributes to the (R)-noradrenaline binding site. Glutamate 382 is a binding site for dopamine. A helical membrane pass occupies residues 403-428 (FWAVVFFVMLLALGLDSSMGGMEAVI). Residues aspartate 418 and serine 419 each contribute to the Na(+) site. Residues 429–443 (TGLADDFQVLKRHRK) are Cytoplasmic-facing. A helical transmembrane segment spans residues 444–464 (LFTFGVTFSTFLLALFCITKG). Position 465 (glycine 465) is a topological domain, extracellular. Residues 466–492 (IYVLTLLDTFAAGTSILFAVLMEAIGV) form a helical membrane-spanning segment. Topologically, residues 493–522 (SWFYGVDRFSNDIQQMMGFRPGLYWRLCWK) are cytoplasmic. Residues 523 to 545 (FVSPAFLLFVVVVSIINFKPLTY) form a helical membrane-spanning segment. Residues 546–548 (DDY) lie on the Extracellular side of the membrane. The chain crosses the membrane as a helical span at residues 549–569 (IFPPWANWVGWGIALSSMVLV). The Cytoplasmic segment spans residues 570 to 617 (PIYVIYKFLSTQGSLWERLAYGITPENEHHLVAQRDIRQFQLQHWLAI).

Belongs to the sodium:neurotransmitter symporter (SNF) (TC 2.A.22) family. SLC6A2 subfamily. Monomer. Can form homodimers in the cell membrane; homodimerization is mostly mediated by cholesterol and lipids, and regulates neurotransmitter transport activity. Interacts with PRKCABP. Post-translationally, palmitoylated; palmitoylation regulates protein levels and neurotransmitter transport.

It localises to the cell membrane. The protein localises to the cell projection. The protein resides in the axon. Its subcellular location is the synapse. It is found in the synaptosome. It carries out the reaction (R)-noradrenaline(out) + chloride(out) + Na(+)(out) = (R)-noradrenaline(in) + chloride(in) + Na(+)(in). The catalysed reaction is dopamine(out) + chloride(out) + Na(+)(out) = dopamine(in) + chloride(in) + Na(+)(in). It catalyses the reaction dopamine(out) + chloride(out) + 2 Na(+)(out) = dopamine(in) + chloride(in) + 2 Na(+)(in). Its activity is regulated as follows. Inhibited by mazindol, desipramine, nomifensine and nortriptyline. Mediates sodium- and chloride-dependent transport of norepinephrine (also known as noradrenaline), the primary signaling neurotransmitter in the autonomic sympathetic nervous system. Is responsible for norepinephrine re-uptake and clearance from the synaptic cleft, thus playing a crucial role in norepinephrine inactivation and homeostasis. Can also mediate sodium- and chloride-dependent transport of dopamine. The chain is Sodium-dependent noradrenaline transporter from Homo sapiens (Human).